Here is a 378-residue protein sequence, read N- to C-terminus: Cytochrome b (378 aa).

4 helical membrane passes run Phe34–Met54, Trp78–Val99, Trp114–Leu134, and Phe179–Leu199. Residues His84 and His98 each contribute to the heme b site. 2 residues coordinate heme b: His183 and His197. His202 provides a ligand contact to a ubiquinone. 4 helical membrane-spanning segments follow: residues Phe227 to Ser247, Leu289 to Asn309, Ile321 to Ala341, and Tyr348 to Leu368.

The protein belongs to the cytochrome b family. As to quaternary structure, the main subunits of complex b-c1 are: cytochrome b, cytochrome c1 and the Rieske protein. It depends on heme b as a cofactor.

The protein localises to the mitochondrion inner membrane. In terms of biological role, component of the ubiquinol-cytochrome c reductase complex (complex III or cytochrome b-c1 complex) that is part of the mitochondrial respiratory chain. The b-c1 complex mediates electron transfer from ubiquinol to cytochrome c. Contributes to the generation of a proton gradient across the mitochondrial membrane that is then used for ATP synthesis. The chain is Cytochrome b (mt:Cyt-b) from Drosophila simulans (Fruit fly).